The sequence spans 358 residues: Alanine racemase (358 aa).

The Proton acceptor; specific for D-alanine role is filled by Lys35. At Lys35 the chain carries N6-(pyridoxal phosphate)lysine. Arg131 contributes to the substrate binding site. Tyr253 serves as the catalytic Proton acceptor; specific for L-alanine. A substrate-binding site is contributed by Met301.

The protein belongs to the alanine racemase family. Pyridoxal 5'-phosphate is required as a cofactor.

The catalysed reaction is L-alanine = D-alanine. The protein operates within amino-acid biosynthesis; D-alanine biosynthesis; D-alanine from L-alanine: step 1/1. Its function is as follows. Catalyzes the interconversion of L-alanine and D-alanine. May also act on other amino acids. The sequence is that of Alanine racemase (alr) from Alteromonas mediterranea (strain DSM 17117 / CIP 110805 / LMG 28347 / Deep ecotype).